A 141-amino-acid chain; its full sequence is 3-hydroxyacyl-[acyl-carrier-protein] dehydratase FabZ (141 aa).

His-49 is an active-site residue.

This sequence belongs to the thioester dehydratase family. FabZ subfamily.

The protein localises to the cytoplasm. The enzyme catalyses a (3R)-hydroxyacyl-[ACP] = a (2E)-enoyl-[ACP] + H2O. Involved in unsaturated fatty acids biosynthesis. Catalyzes the dehydration of short chain beta-hydroxyacyl-ACPs and long chain saturated and unsaturated beta-hydroxyacyl-ACPs. This Clostridium acetobutylicum (strain ATCC 824 / DSM 792 / JCM 1419 / IAM 19013 / LMG 5710 / NBRC 13948 / NRRL B-527 / VKM B-1787 / 2291 / W) protein is 3-hydroxyacyl-[acyl-carrier-protein] dehydratase FabZ.